The following is a 229-amino-acid chain: MGKKYTESVKLVDKNTLYTVQEAIELVTKTSKAKFDETVELAVRLGVDPRHADQQVRGAVVLPHGTGKTVRVLVFAKGDKVNEAQEAGADFVGAEELVEKIQKENWFDFDVVVATPDMMGVVGRLGRVLGPKGLMPNPKSGTVTFDVAKAIADIKAGKVEYRVDKTAIIHVPIGKASFGEGKLSDNFHVLMEAVVKAKPAAAKGQYIKSVAISSTMGPGIKINPGKVLE.

It belongs to the universal ribosomal protein uL1 family. In terms of assembly, part of the 50S ribosomal subunit.

Functionally, binds directly to 23S rRNA. The L1 stalk is quite mobile in the ribosome, and is involved in E site tRNA release. Its function is as follows. Protein L1 is also a translational repressor protein, it controls the translation of the L11 operon by binding to its mRNA. This Clostridium botulinum (strain 657 / Type Ba4) protein is Large ribosomal subunit protein uL1.